Here is a 111-residue protein sequence, read N- to C-terminus: Nascent polypeptide-associated complex protein (111 aa).

Residues 3–72 (GMNPRQMKKL…EEVREVLEIS (70 aa)) form the NAC-A/B domain.

Belongs to the NAC-alpha family. In terms of assembly, homodimer. Interacts with the ribosome. Binds ribosomal RNA.

In terms of biological role, contacts the emerging nascent chain on the ribosome. The protein is Nascent polypeptide-associated complex protein of Thermococcus kodakarensis (strain ATCC BAA-918 / JCM 12380 / KOD1) (Pyrococcus kodakaraensis (strain KOD1)).